Here is a 976-residue protein sequence, read N- to C-terminus: Leucine--tRNA ligase (976 aa).

A 'HIGH' region motif is present at residues 63–74 (PYPSGVGLHVGH). The 'KMSKS' region signature appears at 745–749 (KMGKS). ATP is bound at residue Lys-748.

The protein belongs to the class-I aminoacyl-tRNA synthetase family.

The protein resides in the cytoplasm. The enzyme catalyses tRNA(Leu) + L-leucine + ATP = L-leucyl-tRNA(Leu) + AMP + diphosphate. In Corynebacterium jeikeium (strain K411), this protein is Leucine--tRNA ligase.